The chain runs to 555 residues: Glycerol dehydratase large subunit (555 aa).

It belongs to the diol/glycerol dehydratase large subunit family. Probably consists of three subunits: large, medium, and small. Adenosylcob(III)alamin is required as a cofactor.

It carries out the reaction glycerol = 3-hydroxypropanal + H2O. This Citrobacter freundii protein is Glycerol dehydratase large subunit (dhaB).